The chain runs to 598 residues: Serine/threonine-protein kinase cot-1 (598 aa).

Polar residues-rich tracts occupy residues Met-1 to Thr-16, Thr-24 to Pro-33, and Pro-99 to Glu-126. Disordered stretches follow at residues Met-1–Gln-46, Gly-80–Lys-148, and Arg-163–Ile-190. In terms of domain architecture, Protein kinase spans Tyr-214–Phe-518. Residues Ile-220–Val-228 and Lys-243 each bind ATP. The Proton acceptor role is filled by Asp-337. One can recognise an AGC-kinase C-terminal domain in the interval Arg-519–Arg-598.

It belongs to the protein kinase superfamily. STE Ser/Thr protein kinase family. COT1 subfamily.

It carries out the reaction L-seryl-[protein] + ATP = O-phospho-L-seryl-[protein] + ADP + H(+). The enzyme catalyses L-threonyl-[protein] + ATP = O-phospho-L-threonyl-[protein] + ADP + H(+). Its function is as follows. Protein kinase required for hyphal elongation. This chain is Serine/threonine-protein kinase cot-1 (cot-1), found in Neurospora crassa (strain ATCC 24698 / 74-OR23-1A / CBS 708.71 / DSM 1257 / FGSC 987).